The following is a 217-amino-acid chain: Ribosomal RNA small subunit methyltransferase G (217 aa).

Residues Gly79, Leu84, 102-104 (DST), 130-131 (VE), and Arg144 contribute to the S-adenosyl-L-methionine site.

This sequence belongs to the methyltransferase superfamily. RNA methyltransferase RsmG family.

The protein resides in the cytoplasm. Functionally, specifically methylates the N7 position of a guanine in 16S rRNA. This Chlorobaculum tepidum (strain ATCC 49652 / DSM 12025 / NBRC 103806 / TLS) (Chlorobium tepidum) protein is Ribosomal RNA small subunit methyltransferase G.